Here is a 76-residue protein sequence, read N- to C-terminus: Omega-conotoxin-like TeA61 (76 aa).

Positions methionine 1–alanine 22 are cleaved as a signal peptide. Positions aspartate 23–arginine 51 are excised as a propeptide. Disulfide bonds link cysteine 52/cysteine 67, cysteine 59/cysteine 70, and cysteine 66/cysteine 75.

It belongs to the conotoxin O1 superfamily. In terms of tissue distribution, expressed by the venom duct.

Its subcellular location is the secreted. Its function is as follows. Omega-conotoxins act at presynaptic membranes, they bind and block voltage-gated calcium channels (Cav). This Conus textile (Cloth-of-gold cone) protein is Omega-conotoxin-like TeA61.